The primary structure comprises 288 residues: 4-diphosphocytidyl-2-C-methyl-D-erythritol kinase (288 aa).

Residue K8 is part of the active site. 90-100 contributes to the ATP binding site; the sequence is PVGAGLAGGSS. D132 is a catalytic residue.

The protein belongs to the GHMP kinase family. IspE subfamily.

It carries out the reaction 4-CDP-2-C-methyl-D-erythritol + ATP = 4-CDP-2-C-methyl-D-erythritol 2-phosphate + ADP + H(+). It participates in isoprenoid biosynthesis; isopentenyl diphosphate biosynthesis via DXP pathway; isopentenyl diphosphate from 1-deoxy-D-xylulose 5-phosphate: step 3/6. Functionally, catalyzes the phosphorylation of the position 2 hydroxy group of 4-diphosphocytidyl-2C-methyl-D-erythritol. The sequence is that of 4-diphosphocytidyl-2-C-methyl-D-erythritol kinase from Chlamydia trachomatis serovar A (strain ATCC VR-571B / DSM 19440 / HAR-13).